Consider the following 605-residue polypeptide: Isocitrate dehydrogenase kinase/phosphatase (605 aa).

Residues 353–359 and Lys-374 each bind ATP; that span reads APGFKGT. The active site involves Asp-413.

This sequence belongs to the AceK family.

It is found in the cytoplasm. It carries out the reaction L-seryl-[isocitrate dehydrogenase] + ATP = O-phospho-L-seryl-[isocitrate dehydrogenase] + ADP + H(+). Bifunctional enzyme which can phosphorylate or dephosphorylate isocitrate dehydrogenase (IDH) on a specific serine residue. This is a regulatory mechanism which enables bacteria to bypass the Krebs cycle via the glyoxylate shunt in response to the source of carbon. When bacteria are grown on glucose, IDH is fully active and unphosphorylated, but when grown on acetate or ethanol, the activity of IDH declines drastically concomitant with its phosphorylation. The polypeptide is Isocitrate dehydrogenase kinase/phosphatase (Rhodopseudomonas palustris (strain HaA2)).